The following is a 213-amino-acid chain: uncharacterized protein (213 aa).

Coiled-coil stretches lie at residues 54–78 (KEQTKLNNLIEKGKQMLKEYNNLKL) and 108–151 (VKDV…STSK). A compositionally biased stretch (basic and acidic residues) spans 122-142 (IEKEKEEEKAAKKAEKAEEKK). The segment at 122–213 (IEKEKEEEKA…FGGKPTGQIW (92 aa)) is disordered. A compositionally biased stretch (low complexity) spans 146–188 (KNSTSKSGSKSSKSSSGSSKSSSKSSKSSKSSSGSSKSSSKSS). Residues 189–199 (KNSKKSSKKSN) show a composition bias toward basic residues.

This sequence belongs to the mimivirus R546 family.

This is an uncharacterized protein from Acanthamoeba polyphaga (Amoeba).